We begin with the raw amino-acid sequence, 224 residues long: Octanoyltransferase (224 aa).

One can recognise a BPL/LPL catalytic domain in the interval 29–224; sequence EATPDALWIC…GQKLATYLAP (196 aa). Residues 68-75, 157-159, and 170-172 contribute to the substrate site; these read RGGQVTFH, ALG, and GVA. Catalysis depends on Cys188, which acts as the Acyl-thioester intermediate.

This sequence belongs to the LipB family.

The protein resides in the cytoplasm. The catalysed reaction is octanoyl-[ACP] + L-lysyl-[protein] = N(6)-octanoyl-L-lysyl-[protein] + holo-[ACP] + H(+). Its pathway is protein modification; protein lipoylation via endogenous pathway; protein N(6)-(lipoyl)lysine from octanoyl-[acyl-carrier-protein]: step 1/2. Its function is as follows. Catalyzes the transfer of endogenously produced octanoic acid from octanoyl-acyl-carrier-protein onto the lipoyl domains of lipoate-dependent enzymes. Lipoyl-ACP can also act as a substrate although octanoyl-ACP is likely to be the physiological substrate. The chain is Octanoyltransferase from Polaromonas naphthalenivorans (strain CJ2).